The chain runs to 346 residues: KH domain-containing, RNA-binding, signal transduction-associated protein 3 (346 aa).

Positions 1–160 (MEEKYLPELM…IKKFLIPDYN (160 aa)) are involved in homodimerization. Lys4 participates in a covalent cross-link: Glycyl lysine isopeptide (Lys-Gly) (interchain with G-Cter in SUMO2). Residues 61 to 127 (LIPVKQFPKF…AKYFHLNDDL (67 aa)) enclose the KH domain. Disordered regions lie at residues 212 to 266 (RPVA…QETY) and 317 to 346 (GQEE…YGRY). Residues 253 to 262 (GYRPPPPPPT) are compositionally biased toward pro residues.

Belongs to the KHDRBS family. Self-associates to form homooligomers; dimerization increases RNA affinity. Interacts with KHDRBS2/SLM-1. Interacts with KHDRBS1/SAM68; heterooligomer formation of KHDRBS family proteins may modulate RNA substrate specificity. Interacts with the splicing regulatory proteins SFRS9, SAFB and YTHDC1. Interacts with HNRPL, RBMX, p85 subunit of PI3-kinase, SERPINB5. Phosphorylated on tyrosine residues by PTK6. In terms of tissue distribution, highly expressed in testis and brain. In adult cerebellum expressed predominantly in internal granular layer interneurons and in hippocampus is exclusively expressed in CA neurons; expression is restricted to neuronal subpopulations largely non-overlapping with expression of KHDRBS2/SLM-1.

It is found in the nucleus. In terms of biological role, RNA-binding protein that plays a role in the regulation of alternative splicing and influences mRNA splice site selection and exon inclusion. Binds preferentially to the 5'-[AU]UAAA-3' motif in vitro. Binds optimally to RNA containing 5'-[AU]UAA-3' as a bipartite motif spaced by more than 15 nucleotides. Binds poly(A). RNA-binding abilities are down-regulated by tyrosine kinase PTK6. Involved in splice site selection of vascular endothelial growth factor. In vitro regulates CD44 alternative splicing by direct binding to purine-rich exonic enhancer. Can regulate alternative splicing of neurexins NRXN1-3 in the laminin G-like domain 6 containing the evolutionary conserved neurexin alternative spliced segment 4 (AS4) involved in neurexin selective targeting to postsynaptic partners such as neuroligins and LRRTM family members. High concentrations in forebrain structures block splicing inclusion of NRXN1-3 AS4 exons while low concentrations favor their inclusion. Targeted, cell-type specific splicing regulation of NRXN1 at AS4 is involved in neuronal glutamatergic synapse function and plasticity and is linked to behavioral aspects. Regulates expression of KHDRBS2/SLIM-1 in defined neuron populations in the hippocampus by modifying its alternative splicing resulting in a transcript predicted to undergo nonsense-mediated decay. Can bind FABP9 mRNA. May play a role as a negative regulator of cell growth. Inhibits cell proliferation. The sequence is that of KH domain-containing, RNA-binding, signal transduction-associated protein 3 (Khdrbs3) from Mus musculus (Mouse).